Here is a 373-residue protein sequence, read N- to C-terminus: Cytoplasmic tRNA 2-thiolation protein 1 (373 aa).

It belongs to the TtcA family. CTU1/NCS6/ATPBD3 subfamily.

It is found in the cytoplasm. It functions in the pathway tRNA modification; 5-methoxycarbonylmethyl-2-thiouridine-tRNA biosynthesis. Plays a central role in 2-thiolation of mcm(5)S(2)U at tRNA wobble positions of tRNA(Lys), tRNA(Glu) and tRNA(Gln). Directly binds tRNAs and probably acts by catalyzing adenylation of tRNAs, an intermediate required for 2-thiolation. It is unclear whether it acts as a sulfurtransferase that transfers sulfur from thiocarboxylated URM1 onto the uridine of tRNAs at wobble position. The polypeptide is Cytoplasmic tRNA 2-thiolation protein 1 (Caenorhabditis elegans).